We begin with the raw amino-acid sequence, 341 residues long: Biotin synthase (341 aa).

The region spanning Ala-40–Arg-267 is the Radical SAM core domain. Residues Cys-55, Cys-59, and Cys-62 each coordinate [4Fe-4S] cluster. Cys-99, Cys-130, Cys-190, and Arg-262 together coordinate [2Fe-2S] cluster.

The protein belongs to the radical SAM superfamily. Biotin synthase family. As to quaternary structure, homodimer. [4Fe-4S] cluster is required as a cofactor. Requires [2Fe-2S] cluster as cofactor.

It catalyses the reaction (4R,5S)-dethiobiotin + (sulfur carrier)-SH + 2 reduced [2Fe-2S]-[ferredoxin] + 2 S-adenosyl-L-methionine = (sulfur carrier)-H + biotin + 2 5'-deoxyadenosine + 2 L-methionine + 2 oxidized [2Fe-2S]-[ferredoxin]. It functions in the pathway cofactor biosynthesis; biotin biosynthesis; biotin from 7,8-diaminononanoate: step 2/2. Catalyzes the conversion of dethiobiotin (DTB) to biotin by the insertion of a sulfur atom into dethiobiotin via a radical-based mechanism. The chain is Biotin synthase from Xylella fastidiosa (strain M12).